Consider the following 455-residue polypeptide: Proline--tRNA ligase (455 aa).

L-proline-binding residues include Thr101, Glu103, and Arg132. 4 residues coordinate ATP: Arg132, Glu134, Gln216, and Thr219. His221 provides a ligand contact to L-proline. ATP-binding residues include Ser253 and Arg255. The interval 329–359 (EIKGVPLRIEVGPKDIENKKITLFRRDTMEK) is interaction with tRNA.

It belongs to the class-II aminoacyl-tRNA synthetase family. ProS type 3 subfamily. In terms of assembly, homodimer. The dimer is functionally asymmetric: only one of the two active sites at a time is able to form prolyl-adenylate, and only one tRNA molecule binds per dimer.

It is found in the cytoplasm. The enzyme catalyses tRNA(Pro) + L-proline + ATP = L-prolyl-tRNA(Pro) + AMP + diphosphate. Inhibited by high concentrations of prolinamide. In terms of biological role, catalyzes the attachment of proline to tRNA(Pro) in a two-step reaction: proline is first activated by ATP to form Pro-AMP and then transferred to the acceptor end of tRNA(Pro). Can inadvertently accommodate and process non-cognate amino acids such as cysteine and alanine. This chain is Proline--tRNA ligase (proS), found in Methanocaldococcus jannaschii (strain ATCC 43067 / DSM 2661 / JAL-1 / JCM 10045 / NBRC 100440) (Methanococcus jannaschii).